Consider the following 524-residue polypeptide: Glycoprotein (524 aa).

A signal peptide spans M1–G19. Residues K20–Y459 lie on the Virion surface side of the membrane. Disulfide bonds link C43–C302, C54–C226, C80–C113, C178–C188, C208–C247, and C242–C271. N-linked (GlcNAc...) asparagine; by host glycosylation occurs at N56. Residues N266 and N338 are each glycosylated (N-linked (GlcNAc...) asparagine; by host). A disulfide bond links C363 and C370. The chain crosses the membrane as a helical span at residues V460–C480. Residue C480 is the site of S-palmitoyl cysteine; by host attachment. At R481–L524 the chain is on the intravirion side.

The protein belongs to the lyssavirus glycoprotein family. Homotrimer. Interacts with matrix protein. Interacts with host TRFC. Interacts with host BST2; this interaction inhibits viral budding by tethering new virions to the cell surface. Interacts with ITGB1. Interacts with host GRM2. Glycosylated and palmitoylated by host. Glycosylation is crucial for glycoprotein export at the cell surface.

Its subcellular location is the virion membrane. Attaches the virus to host cellular receptor, inducing endocytosis of the virion by using different host proteins including TFRC, GRM2 and ITGB1. In the endosome, the acidic pH induces conformational changes in the glycoprotein trimer, which trigger fusion between virus and cell membrane. There is convincing in vitro evidence that the muscular form of the nicotinic acetylcholine receptor (nAChR), the neuronal cell adhesion molecule (NCAM), and the p75 neurotrophin receptor (p75NTR) bind glycoprotein and thereby facilitate rabies virus entry into cells. The sequence is that of Glycoprotein (G) from Rabies virus (strain Nishigahara RCEH) (RABV).